A 353-amino-acid polypeptide reads, in one-letter code: Phospho-N-acetylmuramoyl-pentapeptide-transferase (353 aa).

10 consecutive transmembrane segments (helical) span residues 13–33 (ILGYITIRAGIAFFLALFFTL), 66–86 (TPTMGGIVFIFATILASLISI), 88–108 (FSNLYAVGAVLTLIFFSIIGF), 130–150 (LILQTTFALIISIFLYTLSDF), 162–182 (PLFDMGIFAIFFWVIVIIATS), 193–213 (GLATVPSITALASFSIIIYIT), 229–249 (IGEVAIVSSALIGALSGFLWY), 256–276 (VFMGDSGSLTIGAFLGYLAII), 281–301 (ILLLLIGSIFVIETLSVILQV), and 330–350 (KIIVRFWIIATLSNVIALITL).

The protein belongs to the glycosyltransferase 4 family. MraY subfamily. Requires Mg(2+) as cofactor.

Its subcellular location is the cell inner membrane. The catalysed reaction is UDP-N-acetyl-alpha-D-muramoyl-L-alanyl-gamma-D-glutamyl-meso-2,6-diaminopimeloyl-D-alanyl-D-alanine + di-trans,octa-cis-undecaprenyl phosphate = di-trans,octa-cis-undecaprenyl diphospho-N-acetyl-alpha-D-muramoyl-L-alanyl-D-glutamyl-meso-2,6-diaminopimeloyl-D-alanyl-D-alanine + UMP. The protein operates within cell wall biogenesis; peptidoglycan biosynthesis. Catalyzes the initial step of the lipid cycle reactions in the biosynthesis of the cell wall peptidoglycan: transfers peptidoglycan precursor phospho-MurNAc-pentapeptide from UDP-MurNAc-pentapeptide onto the lipid carrier undecaprenyl phosphate, yielding undecaprenyl-pyrophosphoryl-MurNAc-pentapeptide, known as lipid I. The polypeptide is Phospho-N-acetylmuramoyl-pentapeptide-transferase (Sulfurimonas denitrificans (strain ATCC 33889 / DSM 1251) (Thiomicrospira denitrificans (strain ATCC 33889 / DSM 1251))).